The sequence spans 155 residues: Endoribonuclease YbeY (155 aa).

Residues histidine 114, histidine 118, and histidine 124 each contribute to the Zn(2+) site.

Belongs to the endoribonuclease YbeY family. Zn(2+) is required as a cofactor.

The protein resides in the cytoplasm. In terms of biological role, single strand-specific metallo-endoribonuclease involved in late-stage 70S ribosome quality control and in maturation of the 3' terminus of the 16S rRNA. This Shigella dysenteriae serotype 1 (strain Sd197) protein is Endoribonuclease YbeY.